The sequence spans 688 residues: Elongation factor G (688 aa).

The tr-type G domain occupies 8-282 (KNFRNFGIMA…AVVDFLPSPV (275 aa)). Residues 17–24 (AHIDAGKT), 81–85 (DTPGH), and 135–138 (NKMD) each bind GTP.

It belongs to the TRAFAC class translation factor GTPase superfamily. Classic translation factor GTPase family. EF-G/EF-2 subfamily.

The protein resides in the cytoplasm. Functionally, catalyzes the GTP-dependent ribosomal translocation step during translation elongation. During this step, the ribosome changes from the pre-translocational (PRE) to the post-translocational (POST) state as the newly formed A-site-bound peptidyl-tRNA and P-site-bound deacylated tRNA move to the P and E sites, respectively. Catalyzes the coordinated movement of the two tRNA molecules, the mRNA and conformational changes in the ribosome. The protein is Elongation factor G (fusA) of Mycoplasma genitalium (strain ATCC 33530 / DSM 19775 / NCTC 10195 / G37) (Mycoplasmoides genitalium).